A 252-amino-acid polypeptide reads, in one-letter code: Tumor necrosis factor ligand superfamily member 15 (252 aa).

Over 1–39 (MAEELGLGFGEGVPVEVLPEGCRHRPEARAGLAARSKAC) the chain is Cytoplasmic. A helical; Signal-anchor for type II membrane protein transmembrane segment spans residues 40-60 (LALTCCLLSFPILAGLSTLLM). The Extracellular portion of the chain corresponds to 61–252 (AGQLRVPGKD…DKTFFGAFLL (192 aa)). The 157-residue stretch at 96-252 (PRAHLTIKKQ…DKTFFGAFLL (157 aa)) folds into the THD domain. N137 carries N-linked (GlcNAc...) asparagine glycosylation. A disulfide bond links C163 and C203. An N-linked (GlcNAc...) asparagine glycan is attached at N230.

This sequence belongs to the tumor necrosis factor family. As to quaternary structure, homotrimer.

The protein localises to the membrane. Its function is as follows. Receptor for TNFRSF25 and TNFRSF6B. Mediates activation of NF-kappa-B. Inhibits vascular endothelial growth and angiogenesis (in vitro). Promotes activation of caspases and apoptosis. Promotes splenocyte alloactivation. The polypeptide is Tumor necrosis factor ligand superfamily member 15 (Tnfsf15) (Mus musculus (Mouse)).